The chain runs to 724 residues: MDENKTKPTGKCPVMHGGNTSTGSSNTDWWPNALNLDILHQHDTKTNPLGSDFSYREALKTLDVDALKKDLHALMTDSQEWWPADWGHYGGLMIRMAWHSAGSYRTTDGRGGGGTGNQRFAPLNSWPDNVSLDKARRLLWPIKRKYGNKLSWADLIILAGTIAYESMGLKTFGFAFGREDIWQPEKDTYWGAEKEWLANSTERYGSDDRTSLENPLAAVQMGLIYVNPEGVDGKSDPLRTAQDMRVTFSRMAMNDEETVALTAGGHTVGKTHGNGDASLLGAAPESADVEEQGLGWHNPTGSGKGRYTVTSGLEGAWTTHPTQWDNGFFQMLLNHEWELRKSPAGASQWEPVSIKEEDKPVDVEDPSIRYNPMMTDADMALKVDPEYRKISERFSRDQAYFSEVFARAWFKLTHRDMGPKARYVGPDVPQEDLLWQDPVPAGRTDYDVDLVKARIAESSLSISELVATAWDSARTFRGSDMRGGANGARIRLAPQKDWVGNEPARLARVLVVLESIAAATGASVADTIVLAGNVGIEKAAKAAGVQVTVPFAPGRGDTTDALTDVESFDVLEPIHDGYRNWLKKDYAVSVEELMLDRTQLMGLTANEMTVLVGGLRVLGTNYGGTKHGVFTDREGALTNDFFVNLTDMKYTWKPYRKDLYEIRDRKTGEVKWTATRLDLVFGSNSILRAYAEVYAQDDSKEKFVNDFVAAWVKVMNADRFDLAE.

Residues 1–26 form a disordered region; it reads MDENKTKPTGKCPVMHGGNTSTGSSN. The tryptophyl-tyrosyl-methioninium (Trp-Tyr) (with M-251) cross-link spans 98–225; that stretch reads WHSAGSYRTT…LAAVQMGLIY (128 aa). The Proton acceptor role is filled by histidine 99. Residues 225-251 constitute a cross-link (tryptophyl-tyrosyl-methioninium (Tyr-Met) (with W-98)); sequence YVNPEGVDGKSDPLRTAQDMRVTFSRM. Histidine 266 lines the heme b pocket.

Belongs to the peroxidase family. Peroxidase/catalase subfamily. Homodimer or homotetramer. The cofactor is heme b. Post-translationally, formation of the three residue Trp-Tyr-Met cross-link is important for the catalase, but not the peroxidase activity of the enzyme.

The catalysed reaction is H2O2 + AH2 = A + 2 H2O. It catalyses the reaction 2 H2O2 = O2 + 2 H2O. Its function is as follows. Bifunctional enzyme with both catalase and broad-spectrum peroxidase activity. The polypeptide is Catalase-peroxidase (Pectobacterium atrosepticum (strain SCRI 1043 / ATCC BAA-672) (Erwinia carotovora subsp. atroseptica)).